The following is a 492-amino-acid chain: Chitooligosaccharide oxidase (492 aa).

The signal sequence occupies residues 1 to 19 (MHFNTLTCVLVGLVAHTSA). One can recognise an FAD-binding PCMH-type domain in the interval 57–229 (LPFEPAAIAV…VELEFQTFAA (173 aa)). Residues 94 to 154 (HSYTSLGFGG…GKRALAHGTC (61 aa)) constitute a cross-link (6-(S-cysteinyl)-8alpha-(pros-histidyl)-FAD (His-Cys)).

Belongs to the oxygen-dependent FAD-linked oxidoreductase family. FAD serves as cofactor. The FAD cofactor is bound via a bicovalent 6-S-cysteinyl, 8alpha-N1-histidyl FAD linkage.

The protein localises to the secreted. The enzyme catalyses N,N'-diacetylchitobiose + O2 = N,N'-diacetylchitobiono-1,5-lactone + H2O2. It carries out the reaction N,N',N''-triacetylchitotriose + O2 = N,N',N''-triacetylchitotriono-1,5-lactone + H2O2. The catalysed reaction is N,N',N'',N'''-tetraacetylchitotetraose + O2 = N,N',N'',N'''-tetraacetylchitotetraono-1,5-lactone + H2O2. In terms of biological role, catalyzes the selective oxidation of C1 hydroxyl moieties on chitooligosaccharides with concomitant reduction of molecular oxygen to hydrogen peroxide. This results in the formation of the corresponding lactones, which typically undergo spontaneous hydrolysis. Chitooligosaccharides are homo- or heterooligomers of N-acetylglucosamine (GlcNAc) and D-glucosamine which are linked through beta-1,4-glycosidic bonds. For optimal substrate binding at least 2 GlcNAc units are needed, and chitooligosaccharide oxidase is most efficient on chitobiose, chitotriose and chitotetraose. This chain is Chitooligosaccharide oxidase, found in Gibberella zeae (strain ATCC MYA-4620 / CBS 123657 / FGSC 9075 / NRRL 31084 / PH-1) (Wheat head blight fungus).